The primary structure comprises 393 residues: Flavohemoprotein (393 aa).

The 139-residue stretch at 1-139 (MLSAEHRAIV…LADLLIGLEE (139 aa)) folds into the Globin domain. His85 is a heme b binding site. Active-site charge relay system residues include Tyr95 and Glu138. The tract at residues 150–393 (GGWRGTRAFV…EFFGPASALD (244 aa)) is reductase. In terms of domain architecture, FAD-binding FR-type spans 153–256 (RGTRAFVVAR…LTPSGDFTLE (104 aa)). FAD-binding positions include Tyr191 and 205–208 (RNYS). Residue 268-273 (GVGITP) coordinates NADP(+). 385 to 388 (FFGP) contacts FAD.

Belongs to the globin family. Two-domain flavohemoproteins subfamily. The protein in the C-terminal section; belongs to the flavoprotein pyridine nucleotide cytochrome reductase family. Requires heme b as cofactor. FAD is required as a cofactor.

It catalyses the reaction 2 nitric oxide + NADPH + 2 O2 = 2 nitrate + NADP(+) + H(+). The enzyme catalyses 2 nitric oxide + NADH + 2 O2 = 2 nitrate + NAD(+) + H(+). Functionally, is involved in NO detoxification in an aerobic process, termed nitric oxide dioxygenase (NOD) reaction that utilizes O(2) and NAD(P)H to convert NO to nitrate, which protects the bacterium from various noxious nitrogen compounds. Therefore, plays a central role in the inducible response to nitrosative stress. This Burkholderia sp. (strain TH2) protein is Flavohemoprotein.